Here is a 146-residue protein sequence, read N- to C-terminus: Large ribosomal subunit protein uL15 (146 aa).

Basic and acidic residues predominate over residues 1–13 (MKLHELHSAEGSR). The tract at residues 1 to 55 (MKLHELHSAEGSRRNRKRVGRGTSSGYGKTSGRGQKGQLARQGGHTRLGFEGGQM) is disordered. Residues 23–35 (TSSGYGKTSGRGQ) are compositionally biased toward gly residues.

This sequence belongs to the universal ribosomal protein uL15 family. In terms of assembly, part of the 50S ribosomal subunit.

In terms of biological role, binds to the 23S rRNA. The chain is Large ribosomal subunit protein uL15 from Lactobacillus acidophilus (strain ATCC 700396 / NCK56 / N2 / NCFM).